Here is a 206-residue protein sequence, read N- to C-terminus: Pyrrolidone-carboxylate peptidase (206 aa).

Residues Glu-76, Cys-139, and His-163 contribute to the active site.

It belongs to the peptidase C15 family. In terms of assembly, homotetramer.

It is found in the cytoplasm. The catalysed reaction is Release of an N-terminal pyroglutamyl group from a polypeptide, the second amino acid generally not being Pro.. Its function is as follows. Removes 5-oxoproline from various penultimate amino acid residues except L-proline. The polypeptide is Pyrrolidone-carboxylate peptidase (pcp) (Pyrococcus horikoshii (strain ATCC 700860 / DSM 12428 / JCM 9974 / NBRC 100139 / OT-3)).